The following is a 195-amino-acid chain: 3-hydroxyanthranilate 3,4-dioxygenase (195 aa).

Arg50 provides a ligand contact to O2. Fe cation is bound by residues His54, Glu60, and His102. A substrate-binding site is contributed by Glu60. Substrate contacts are provided by Arg106 and Glu116. A divalent metal cation-binding residues include Cys131, Cys136, Cys170, and Cys173.

Belongs to the 3-HAO family. It depends on Fe(2+) as a cofactor.

It is found in the cytoplasm. The catalysed reaction is 3-hydroxyanthranilate + O2 = (2Z,4Z)-2-amino-3-carboxymuconate 6-semialdehyde. The protein operates within cofactor biosynthesis; NAD(+) biosynthesis; quinolinate from L-kynurenine: step 3/3. In terms of biological role, catalyzes the oxidative ring opening of 3-hydroxyanthranilate to 2-amino-3-carboxymuconate semialdehyde, which spontaneously cyclizes to quinolinate. The sequence is that of 3-hydroxyanthranilate 3,4-dioxygenase (bna1) from Aspergillus terreus (strain NIH 2624 / FGSC A1156).